Reading from the N-terminus, the 619-residue chain is Dynein axonemal intermediate chain 2 (619 aa).

WD repeat units lie at residues 214–254 (KPSS…LVAE), 261–302 (SHRD…EPTE), 362–401 (GHHG…SSIM), 405–445 (YHMA…CDPA), and 450–489 (VCDD…STLQ). The disordered stretch occupies residues 566–619 (EALKKKPKPKKASIEVEGEDELEDIAGEEEESGIIMGEDTGEDDMDEKNEGGAP). Residues 581–597 (VEGEDELEDIAGEEEES) are compositionally biased toward acidic residues.

It belongs to the dynein intermediate chain family. In terms of assembly, consists of at least two heavy chains and a number of intermediate and light chains. Interacts with DNAAF2. Interacts with DNAAF6/PIH1D3. Interacts with HEATR2; probably involved in outer arm dynein assembly. Interacts with CFAP53.

It localises to the cytoplasm. The protein localises to the cytoskeleton. It is found in the cilium axoneme. The protein resides in the dynein axonemal particle. Functionally, part of the dynein complex of respiratory cilia. The chain is Dynein axonemal intermediate chain 2 (Dnai2) from Rattus norvegicus (Rat).